An 83-amino-acid chain; its full sequence is Small ribosomal subunit protein uS17 (83 aa).

This sequence belongs to the universal ribosomal protein uS17 family. In terms of assembly, part of the 30S ribosomal subunit.

Functionally, one of the primary rRNA binding proteins, it binds specifically to the 5'-end of 16S ribosomal RNA. This Francisella tularensis subsp. tularensis (strain FSC 198) protein is Small ribosomal subunit protein uS17.